The following is a 1490-amino-acid chain: Leucine-rich repeat-containing protein 7 (1490 aa).

LRR repeat units follow at residues 23-44 (IISV…VFNF), 47-68 (TLEE…LFNC), 70-91 (ALRK…IASL), 93-114 (NLKE…IKCC), 116-137 (CLTI…FTQL), 139-161 (NLTQ…GRLV), 162-183 (KLRI…MHKL), 185-206 (QLER…LDQI), 208-229 (NLRE…IGKL), 231-253 (MLVY…SGCE), 254-275 (ALED…IGLL), 277-298 (KLTT…IGNL), 300-321 (LLEE…IGYL), 323-344 (SLRT…IGSC), 346-367 (NVTV…IGQM), 369-391 (RLRV…TKLK), and 392-413 (ELAA…QTEA). Residues S439, S441, and S443 each carry the phosphoserine modification. The segment covering 663 to 676 (KKESTDESEVDKTH) has biased composition (basic and acidic residues). Disordered regions lie at residues 663–704 (KKES…NTRM), 785–807 (AGEN…AHGR), and 822–899 (ELEQ…YHDP). The span at 677–686 (CLNNSVSSGT) shows a compositional bias: polar residues. The segment covering 687–700 (YSDYSPSQASSASS) has biased composition (low complexity). T831 is modified (phosphothreonine). A Phosphoserine modification is found at S850. Positions 859–871 (PSKLETTPTTSPL) are enriched in low complexity. Residue T865 is modified to Phosphothreonine. Phosphoserine is present on S869. Over residues 872-882 (PERKDHMKEPT) the composition is skewed to basic and acidic residues. 3 positions are modified to phosphoserine: S947, S949, and S1118. Over residues 1134–1144 (PHELPPGDRYG) the composition is skewed to basic and acidic residues. Disordered regions lie at residues 1134–1158 (PHEL…QSSI) and 1196–1218 (QRRP…TRPV). An Omega-N-methylarginine modification is found at R1149. Positions 1196–1217 (QRRPLSARSYSTESYGASQTRP) are enriched in polar residues. S1233 is subject to Phosphoserine. 2 disordered regions span residues 1238-1265 (GNYG…SCGK) and 1282-1312 (RLDR…PYPL). A compositionally biased stretch (basic and acidic residues) spans 1243 to 1263 (KTSDNSDIKTRPTPVKGEESC). Residues 1286–1307 (TPSQQSNILDNGQEDVSPSGQW) are compositionally biased toward polar residues. Residues S1288 and S1392 each carry the phosphoserine modification. The 91-residue stretch at 1398–1488 (EQFCVRIEKN…TVDLVIQREL (91 aa)) folds into the PDZ domain.

It belongs to the LAP (LRR and PDZ) protein family. In terms of assembly, interacts with CNKSR2 and DLG4. Interacts with CTNND2/Catenin delta-2. Forms a complex with N-cadherin through CTNND2. Interacts with CAMK2A. In terms of tissue distribution, expressed in brain (at protein level).

The protein localises to the cytoplasm. It is found in the postsynaptic density. Functionally, required for normal synaptic spine architecture and function. Necessary for DISC1 and GRM5 localization to postsynaptic density complexes and for both N-methyl D-aspartate receptor-dependent and metabotropic glutamate receptor-dependent long term depression. The polypeptide is Leucine-rich repeat-containing protein 7 (Lrrc7) (Mus musculus (Mouse)).